We begin with the raw amino-acid sequence, 427 residues long: UDP-N-acetylglucosamine--N-acetylmuramyl-(pentapeptide) pyrophosphoryl-undecaprenol N-acetylglucosamine transferase (427 aa).

UDP-N-acetyl-alpha-D-glucosamine is bound by residues 29 to 31 (TGG), Asn141, Arg177, Ser205, Ile258, and Gln303. Positions 408 to 427 (SLHPIPDSRFPIRTSAGGAQ) are disordered.

It belongs to the glycosyltransferase 28 family. MurG subfamily.

The protein localises to the cell inner membrane. It carries out the reaction di-trans,octa-cis-undecaprenyl diphospho-N-acetyl-alpha-D-muramoyl-L-alanyl-D-glutamyl-meso-2,6-diaminopimeloyl-D-alanyl-D-alanine + UDP-N-acetyl-alpha-D-glucosamine = di-trans,octa-cis-undecaprenyl diphospho-[N-acetyl-alpha-D-glucosaminyl-(1-&gt;4)]-N-acetyl-alpha-D-muramoyl-L-alanyl-D-glutamyl-meso-2,6-diaminopimeloyl-D-alanyl-D-alanine + UDP + H(+). It participates in cell wall biogenesis; peptidoglycan biosynthesis. Functionally, cell wall formation. Catalyzes the transfer of a GlcNAc subunit on undecaprenyl-pyrophosphoryl-MurNAc-pentapeptide (lipid intermediate I) to form undecaprenyl-pyrophosphoryl-MurNAc-(pentapeptide)GlcNAc (lipid intermediate II). This Xanthomonas campestris pv. campestris (strain B100) protein is UDP-N-acetylglucosamine--N-acetylmuramyl-(pentapeptide) pyrophosphoryl-undecaprenol N-acetylglucosamine transferase.